The sequence spans 350 residues: Flap endonuclease 1 (350 aa).

The N-domain stretch occupies residues 1-101 (MGVNLRELIP…REVEERLRRK (101 aa)). Mg(2+)-binding residues include Asp-30, Asp-83, Glu-155, Glu-157, Asp-176, Asp-178, and Asp-239. An I-domain region spans residues 119–261 (EARKYAMMAA…TALRLVKSLG (143 aa)). The segment at 341-349 (RQSRLDMWF) is interaction with PCNA.

The protein belongs to the XPG/RAD2 endonuclease family. FEN1 subfamily. Interacts with PCNA. PCNA stimulates the nuclease activity without altering cleavage specificity. The cofactor is Mg(2+).

In terms of biological role, structure-specific nuclease with 5'-flap endonuclease and 5'-3' exonuclease activities involved in DNA replication and repair. During DNA replication, cleaves the 5'-overhanging flap structure that is generated by displacement synthesis when DNA polymerase encounters the 5'-end of a downstream Okazaki fragment. Binds the unpaired 3'-DNA end and kinks the DNA to facilitate 5' cleavage specificity. Cleaves one nucleotide into the double-stranded DNA from the junction in flap DNA, leaving a nick for ligation. Also involved in the base excision repair (BER) pathway. Acts as a genome stabilization factor that prevents flaps from equilibrating into structures that lead to duplications and deletions. Also possesses 5'-3' exonuclease activity on nicked or gapped double-stranded DNA. The sequence is that of Flap endonuclease 1 from Aeropyrum pernix (strain ATCC 700893 / DSM 11879 / JCM 9820 / NBRC 100138 / K1).